The following is a 234-amino-acid chain: MAPIRVVLLDIEGTVCPISFVKDVLFPYALEALPGTLKAKWDSPEFAPYRAAFPAEHAGSQESLAAHVRDLMSKDLKISYLKSLQGYLWETGYRNGELKAPLFLDVAPQLARWREHGGVKVMIYSSGSVPAQKLLFGHTNGEPSDILPWLSDFFDTVNAGPKQEKASYEKIAAKHQEYPIGEWLFLSDNVKEVEAAKQAGMQSYIVDRPGNAELSEEARKEHRVIKSFEEIGDL.

Mg(2+) is bound by residues aspartate 10 and glutamate 12. Residues 125-126 (SS) and lysine 162 each bind substrate. Aspartate 188 provides a ligand contact to Mg(2+).

This sequence belongs to the HAD-like hydrolase superfamily. MasA/MtnC family. Monomer. Mg(2+) is required as a cofactor.

The protein resides in the cytoplasm. It localises to the nucleus. The catalysed reaction is 5-methylsulfanyl-2,3-dioxopentyl phosphate + H2O = 1,2-dihydroxy-5-(methylsulfanyl)pent-1-en-3-one + phosphate. Its pathway is amino-acid biosynthesis; L-methionine biosynthesis via salvage pathway; L-methionine from S-methyl-5-thio-alpha-D-ribose 1-phosphate: step 3/6. It functions in the pathway amino-acid biosynthesis; L-methionine biosynthesis via salvage pathway; L-methionine from S-methyl-5-thio-alpha-D-ribose 1-phosphate: step 4/6. In terms of biological role, bifunctional enzyme that catalyzes the enolization of 2,3-diketo-5-methylthiopentyl-1-phosphate (DK-MTP-1-P) into the intermediate 2-hydroxy-3-keto-5-methylthiopentenyl-1-phosphate (HK-MTPenyl-1-P), which is then dephosphorylated to form the acireductone 1,2-dihydroxy-3-keto-5-methylthiopentene (DHK-MTPene). The chain is Enolase-phosphatase E1 (utr4) from Neurospora crassa (strain ATCC 24698 / 74-OR23-1A / CBS 708.71 / DSM 1257 / FGSC 987).